Here is a 776-residue protein sequence, read N- to C-terminus: DNA ligase (776 aa).

NAD(+) is bound by residues 31 to 35 (DAEYD) and 80 to 81 (SL). Lysine 114 serves as the catalytic N6-AMP-lysine intermediate. Residues arginine 135, glutamate 172, lysine 288, and lysine 312 each contribute to the NAD(+) site. Zn(2+) is bound by residues cysteine 406, cysteine 409, cysteine 436, and cysteine 442. The BRCT domain occupies 693–776 (AEGLPLAGQT…TFLAEQGIVV (84 aa)).

The protein belongs to the NAD-dependent DNA ligase family. LigA subfamily. It depends on Mg(2+) as a cofactor. Requires Mn(2+) as cofactor.

It catalyses the reaction NAD(+) + (deoxyribonucleotide)n-3'-hydroxyl + 5'-phospho-(deoxyribonucleotide)m = (deoxyribonucleotide)n+m + AMP + beta-nicotinamide D-nucleotide.. DNA ligase that catalyzes the formation of phosphodiester linkages between 5'-phosphoryl and 3'-hydroxyl groups in double-stranded DNA using NAD as a coenzyme and as the energy source for the reaction. It is essential for DNA replication and repair of damaged DNA. This chain is DNA ligase, found in Pseudomonas putida (strain GB-1).